The sequence spans 492 residues: Cell division protein FtsA (492 aa).

Disordered stretches follow at residues Gly288–Glu307 and Tyr429–Ser458. The span at Thr291–Ser303 shows a compositional bias: polar residues. A compositionally biased stretch (low complexity) spans Ser436–Thr447.

The protein belongs to the FtsA/MreB family. Self-interacts. Interacts with FtsZ.

The protein resides in the cell inner membrane. In terms of biological role, cell division protein that is involved in the assembly of the Z ring. May serve as a membrane anchor for the Z ring. The sequence is that of Cell division protein FtsA from Helicobacter pylori (strain ATCC 700392 / 26695) (Campylobacter pylori).